The primary structure comprises 307 residues: Coproporphyrin III ferrochelatase (307 aa).

Fe-coproporphyrin III-binding positions include Tyr12, Arg29, 45–46 (RY), Ser53, and Tyr124. Fe(2+)-binding residues include His181 and Glu263.

The protein belongs to the ferrochelatase family.

It is found in the cytoplasm. It catalyses the reaction Fe-coproporphyrin III + 2 H(+) = coproporphyrin III + Fe(2+). It participates in porphyrin-containing compound metabolism; protoheme biosynthesis. Its function is as follows. Involved in coproporphyrin-dependent heme b biosynthesis. Catalyzes the insertion of ferrous iron into coproporphyrin III to form Fe-coproporphyrin III. The chain is Coproporphyrin III ferrochelatase from Staphylococcus aureus (strain MRSA252).